Consider the following 361-residue polypeptide: tRNA/tmRNA (uracil-C(5))-methyltransferase (361 aa).

The S-adenosyl-L-methionine site is built by Gln-185, Tyr-213, Asn-218, Glu-234, and Asp-294. Cys-319 functions as the Nucleophile in the catalytic mechanism. Glu-353 (proton acceptor) is an active-site residue.

It belongs to the class I-like SAM-binding methyltransferase superfamily. RNA M5U methyltransferase family. TrmA subfamily.

The enzyme catalyses uridine(54) in tRNA + S-adenosyl-L-methionine = 5-methyluridine(54) in tRNA + S-adenosyl-L-homocysteine + H(+). It carries out the reaction uridine(341) in tmRNA + S-adenosyl-L-methionine = 5-methyluridine(341) in tmRNA + S-adenosyl-L-homocysteine + H(+). Its function is as follows. Dual-specificity methyltransferase that catalyzes the formation of 5-methyluridine at position 54 (m5U54) in all tRNAs, and that of position 341 (m5U341) in tmRNA (transfer-mRNA). This Pseudomonas putida (strain W619) protein is tRNA/tmRNA (uracil-C(5))-methyltransferase.